Here is a 470-residue protein sequence, read N- to C-terminus: Glutamate--tRNA ligase 2 (470 aa).

Positions 11–21 (PSPTGHLHLGG) match the 'HIGH' region motif. The 'KMSKS' region motif lies at 238–242 (KLSKR). Lys241 lines the ATP pocket.

The protein belongs to the class-I aminoacyl-tRNA synthetase family. Glutamate--tRNA ligase type 1 subfamily. In terms of assembly, monomer.

It localises to the cytoplasm. The catalysed reaction is tRNA(Glu) + L-glutamate + ATP = L-glutamyl-tRNA(Glu) + AMP + diphosphate. In terms of biological role, catalyzes the attachment of glutamate to tRNA(Glu) in a two-step reaction: glutamate is first activated by ATP to form Glu-AMP and then transferred to the acceptor end of tRNA(Glu). This is Glutamate--tRNA ligase 2 from Ehrlichia ruminantium (strain Gardel).